The primary structure comprises 525 residues: Heat shock factor protein 1 (525 aa).

Met1 bears the N-acetylmethionine mark. A DNA-binding domain region spans residues 15–120 (VPAFLTKLWT…LLENIKRKVT (106 aa)). N6-acetyllysine is present on Lys80. Lys91 carries the post-translational modification N6-acetyllysine; alternate. Residue Lys91 forms a Glycyl lysine isopeptide (Lys-Gly) (interchain with G-Cter in SUMO2); alternate linkage. Lys118 carries the post-translational modification N6-acetyllysine. A Phosphoserine; by MAPKAPK2 modification is found at Ser121. Glycyl lysine isopeptide (Lys-Gly) (interchain with G-Cter in SUMO2) cross-links involve residues Lys126 and Lys131. Residues 130–203 (IKIRQDSVTR…ISLVQSNRIL (74 aa)) are hydrophobic repeat HR-A/B. Thr142 is modified (phosphothreonine; by CK2). Lys150 and Lys188 each carry N6-acetyllysine. Residues 203–224 (LGVKRKIPLMLSDSNSAHSVPK) form a d domain region. N6-acetyllysine; alternate is present on Lys208. A Glycyl lysine isopeptide (Lys-Gly) (interchain with G-Cter in SUMO2); alternate cross-link involves residue Lys208. Ser216 carries the phosphoserine; by PLK1 modification. A regulatory domain region spans residues 221–310 (SVPKYGRQYS…PPSPPHSPRV (90 aa)). Lys224 participates in a covalent cross-link: Glycyl lysine isopeptide (Lys-Gly) (interchain with G-Cter in SUMO2). A Phosphoserine; by CAMK2A modification is found at Ser230. Disordered stretches follow at residues 272-327 (APTS…PLSP) and 340-365 (PTPA…TPST). Residues Ser275 and Ser292 each carry the phosphoserine modification. Lys298 carries the N6-acetyllysine; alternate modification. Lys298 is covalently cross-linked (Glycyl lysine isopeptide (Lys-Gly) (interchain with G-Cter in SUMO2); alternate). Residue Lys298 forms a Glycyl lysine isopeptide (Lys-Gly) (interchain with G-Cter in SUMO); alternate linkage. Phosphoserine is present on residues Ser303, Ser307, Ser314, and Ser319. Position 320 is a phosphoserine; by PKA (Ser320). Thr323 is modified (phosphothreonine). A Phosphoserine; by MAPK12 modification is found at Ser326. Polar residues predominate over residues 343–355 (AASNTAPMDTTGA). Phosphoserine is present on Ser345. Residues 367 to 525 (EKCLSVACLD…PHKAKDPTVS (159 aa)) are transactivation domain. The tract at residues 380–405 (LSDHLDAMDSNLDNLQTMLTSHGFSV) is hydrophobic repeat HR-C. The 9aaTAD signature appears at 408-416 (SALLDLFSP). Position 415 is a phosphoserine; by PLK1 (Ser415). Ser440 bears the Phosphoserine mark. Disordered stretches follow at residues 441–460 (PQEP…SGKQ) and 495–525 (YFSE…PTVS). A compositionally biased stretch (basic and acidic residues) spans 515–525 (EPHKAKDPTVS). Lys520 bears the N6-acetyllysine mark.

The protein belongs to the HSF family. Monomer; cytoplasmic latent and transcriptionally inactive monomeric form in unstressed cells. Homotrimer; in response to stress, such as heat shock, homotrimerizes and translocates into the nucleus, binds to heat shock element (HSE) sequences in promoter of heat shock protein (HSP) genes and acquires transcriptional ability. Interacts (via monomeric form) with FKBP4; this interaction occurs in unstressed cells. Associates (via monomeric form) with HSP90 proteins in a multichaperone complex in unnstressed cell; this association maintains HSF1 in a non-DNA-binding and transcriptional inactive form by preventing HSF1 homotrimerization. Homotrimeric transactivation activity is modulated by protein-protein interactions and post-translational modifications. Interacts with HSP90AA1; this interaction is decreased in a IER5-dependent manner, promoting HSF1 accumulation in the nucleus, homotrimerization and DNA-binding activities. Part (via regulatory domain in the homotrimeric form) of a large heat shock-induced HSP90-dependent multichaperone complex at least composed of FKBP4, FKBP5, HSP90 proteins, PPID, PPP5C and PTGES3; this association maintains the HSF1 homotrimeric DNA-bound form in a transcriptionally inactive form. Interacts with BAG3 (via BAG domain); this interaction occurs in normal and heat-shocked cells promoting nuclear shuttling of HSF1 in a BAG3-dependent manner. Interacts (via homotrimeric and hyperphosphorylated form) with FKBP4; this interaction occurs upon heat shock in a HSP90-dependent multichaperone complex. Interacts (via homotrimeric form preferentially) with EEF1A proteins. In heat shocked cells, stress-denatured proteins compete with HSF1 homotrimeric DNA-bound form for association of the HSP90-dependent multichaperone complex, and hence alleviating repression of HSF1-mediated transcriptional activity. Interacts (via homotrimeric form preferentially) with DAXX; this interaction relieves homotrimeric HSF1 from repression of its transcriptional activity by HSP90-dependent multichaperone complex upon heat shock. Interacts (via D domain and preferentially with hyperphosphorylated form) with JNK1; this interaction occurs under both normal growth conditions and immediately upon heat shock. Interacts (via D domain and preferentially with hyperphosphorylated form) with MAPK3; this interaction occurs upon heat shock. Interacts with IER5 (via central region); this interaction promotes PPP2CA-induced dephosphorylation on Ser-121, Ser-307, Ser-314 and Thr-323 and HSF1 transactivation activity. Found in a ribonucleoprotein complex composed of the HSF1 homotrimeric form, translation elongation factor eEF1A proteins and non-coding RNA heat shock RNA-1 (HSR1); this complex occurs upon heat shock and stimulates HSF1 DNA-binding activity. Interacts (via transactivation domain) with HSPA1A/HSP70 and DNAJB1; these interactions result in the inhibition of heat shock- and HSF1-induced transcriptional activity during the attenuation and recovery phase from heat shock. Interacts (via Ser-303 and Ser-307 phosphorylated form) with YWHAE; this interaction promotes HSF1 sequestration in the cytoplasm in an ERK-dependent manner. Found in a complex with IER5 and PPP2CA. Interacts with TPR; this interaction increases upon heat shock and stimulates export of HSP70 mRNA. Interacts with SYMPK (via N-terminus) and CSTF2; these interactions occur upon heat shock. Interacts (via transactivation domain) with HSPA8. Interacts with EEF1D; this interaction occurs at heat shock promoter element (HSE) sequences. Interacts with MAPKAPK2. Interacts with PRKACA/PKA. Interacts (via transactivation domain) with GTF2A2. Interacts (via transactivation domain) with GTF2B. Interacts (via transactivation domain) with TBP. Interacts with CDK9, CCNT1 and EP300. Interacts (via N-terminus) with XRCC5 (via N-terminus) and XRCC6 (via N-terminus); these interactions are direct and prevent XRCC5/XRCC6 heterodimeric binding and non-homologous end joining (NHEJ) repair activities induced by ionizing radiation (IR). Interacts with PLK1; this interaction occurs during the early mitotic period, increases upon heat shock but does not modulate neither HSF1 homotrimerization and DNA-binding activities. Interacts (via Ser-216 phosphorylated form) with CDC20; this interaction occurs in mitosis in a MAD2L1-dependent manner and prevents PLK1-stimulated degradation of HSF1 by blocking the recruitment of the SCF(BTRC) ubiquitin ligase complex. Interacts with MAD2L1; this interaction occurs in mitosis. Interacts with BTRC; this interaction occurs during mitosis, induces its ubiquitin-dependent degradation following stimulus-dependent phosphorylation at Ser-216, a process inhibited by CDC20. Interacts with HSP90AA1 and HSP90AB1. Forms a complex with TTC5/STRAP and p300/EP300; these interactions augment chromatin-bound HSF1 and p300/EP300 histone acetyltransferase activity. Post-translationally, phosphorylated. Phosphorylated in unstressed cells; this phosphorylation is constitutive and implicated in the repression of HSF1 transcriptional activity. Phosphorylated on Ser-121 by MAPKAPK2; this phosphorylation promotes interaction with HSP90 proteins and inhibits HSF1 homotrimerization, DNA-binding and transactivation activities. Phosphorylation on Ser-303 by GSK3B/GSK3-beat and on Ser-307 by MAPK3 within the regulatory domain is involved in the repression of HSF1 transcriptional activity and occurs in a RAF1-dependent manner. Phosphorylation on Ser-303 and Ser-307 increases HSF1 nuclear export in a YWHAE- and XPO1/CRM1-dependent manner. Phosphorylation on Ser-307 is a prerequisite for phosphorylation on Ser-303. According to, Ser-303 is not phosphorylated in unstressed cells. Phosphorylated on Ser-415 by PLK1; phosphorylation promotes nuclear translocation upon heat shock. Hyperphosphorylated upon heat shock and during the attenuation and recovery phase period of the heat shock response. Phosphorylated on Thr-142; this phosphorylation increases HSF1 transactivation activity upon heat shock. Phosphorylation on Ser-230 by CAMK2A; this phosphorylation enhances HSF1 transactivation activity upon heat shock. Phosphorylation on Ser-326 by MAPK12; this phosphorylation enhances HSF1 nuclear translocation, homotrimerization and transactivation activities upon heat shock. Phosphorylated on Ser-320 by PRKACA/PKA; this phosphorylation promotes nuclear localization and transcriptional activity upon heat shock. Phosphorylated by MAPK8; this phosphorylation occurs upon heat shock, induces HSF1 translocation into nuclear stress bodies and negatively regulates transactivation activity. Neither basal nor stress-inducible phosphorylation on Ser-230, Ser-292, Ser-303, Ser-307, Ser-314, Ser-319, Ser-320, Thr-323, Ser-326, Ser-338, Ser-345, Ser-364 and Thr-365 within the regulatory domain is involved in the regulation of HSF1 subcellular localization or DNA-binding activity; however, it negatively regulates HSF1 transactivation activity. Phosphorylated on Ser-216 by PLK1 in the early mitotic period; this phosphorylation regulates HSF1 localization to the spindle pole, the recruitment of the SCF(BTRC) ubiquitin ligase complex inducing HSF1 degradation, and hence mitotic progression. Dephosphorylated on Ser-121, Ser-307, Ser-314 and Thr-323 by phosphatase PPP2CA in an IER5-dependent manner, leading to HSF1-mediated transactivation activity. Sumoylated with SUMO1 and SUMO2 upon heat shock in a ERK2-dependent manner. Sumoylated by SUMO1 on Lys-298; sumoylation occurs upon heat shock and promotes its localization to nuclear stress bodies and DNA-binding activity. Phosphorylation on Ser-303 and Ser-307 is probably a prerequisite for sumoylation. In terms of processing, acetylated on Lys-118; this acetylation is decreased in a IER5-dependent manner. Acetylated on Lys-118, Lys-208 and Lys-298; these acetylations occur in a EP300-dependent manner. Acetylated on Lys-80; this acetylation inhibits DNA-binding activity upon heat shock. Deacetylated on Lys-80 by SIRT1; this deacetylation increases DNA-binding activity. Post-translationally, ubiquitinated by SCF(BTRC) and degraded following stimulus-dependent phosphorylation at Ser-216 by PLK1 in mitosis. Polyubiquitinated. Undergoes proteasomal degradation upon heat shock and during the attenuation and recovery phase period of the heat shock response.

It is found in the nucleus. The protein localises to the cytoplasm. The protein resides in the nucleoplasm. It localises to the perinuclear region. Its subcellular location is the cytoskeleton. It is found in the spindle pole. The protein localises to the microtubule organizing center. The protein resides in the centrosome. It localises to the chromosome. Its subcellular location is the centromere. It is found in the kinetochore. Functionally, functions as a stress-inducible and DNA-binding transcription factor that plays a central role in the transcriptional activation of the heat shock response (HSR), leading to the expression of a large class of molecular chaperones, heat shock proteins (HSPs), that protect cells from cellular insult damage. In unstressed cells, is present in a HSP90-containing multichaperone complex that maintains it in a non-DNA-binding inactivated monomeric form. Upon exposure to heat and other stress stimuli, undergoes homotrimerization and activates HSP gene transcription through binding to site-specific heat shock elements (HSEs) present in the promoter regions of HSP genes. Upon heat shock stress, forms a chromatin-associated complex with TTC5/STRAP and p300/EP300 to stimulate HSR transcription, therefore increasing cell survival. Activation is reversible, and during the attenuation and recovery phase period of the HSR, returns to its unactivated form. Binds to inverted 5'-NGAAN-3' pentamer DNA sequences. Binds to chromatin at heat shock gene promoters. Activates transcription of transcription factor FOXR1 which in turn activates transcription of the heat shock chaperones HSPA1A and HSPA6 and the antioxidant NADPH-dependent reductase DHRS2. Binds the promoter region upstream of exon 1 of Mpv17l to activate expression of the M-LPS isoform which is involved in metabolism of reactive oxygen species. Also serves several other functions independently of its transcriptional activity. Involved in the repression of Ras-induced transcriptional activation of the c-fos gene in heat-stressed cells. Positively regulates pre-mRNA 3'-end processing and polyadenylation of HSP70 mRNA upon heat-stressed cells in a symplekin (SYMPK)-dependent manner. Plays a role in nuclear export of stress-induced HSP70 mRNA. Plays a role in the regulation of mitotic progression. Also plays a role as a negative regulator of non-homologous end joining (NHEJ) repair activity in a DNA damage-dependent manner. Involved in stress-induced cancer cell proliferation in a IER5-dependent manner. This Mus musculus (Mouse) protein is Heat shock factor protein 1.